Reading from the N-terminus, the 611-residue chain is UvrABC system protein C (611 aa).

In terms of domain architecture, GIY-YIG spans 14-91 (TSPGCYIHKD…IKENKPKYNI (78 aa)). Residues 196 to 231 (DQIIEDLRGKMAGAAQTMEFEKAAEYRDLIQSIGTL) form the UVR domain.

This sequence belongs to the UvrC family. In terms of assembly, interacts with UvrB in an incision complex.

It localises to the cytoplasm. Functionally, the UvrABC repair system catalyzes the recognition and processing of DNA lesions. UvrC both incises the 5' and 3' sides of the lesion. The N-terminal half is responsible for the 3' incision and the C-terminal half is responsible for the 5' incision. This Streptococcus gordonii (strain Challis / ATCC 35105 / BCRC 15272 / CH1 / DL1 / V288) protein is UvrABC system protein C.